A 558-amino-acid chain; its full sequence is Delta-1-pyrroline-5-carboxylate dehydrogenase, mitochondrial (558 aa).

NAD(+) is bound by residues Ser198, Lys223, and 276-280 (GSTGV). Glu306 acts as the Proton acceptor in catalysis. The active-site Nucleophile is the Cys340. Glu438 is a binding site for NAD(+).

The protein belongs to the aldehyde dehydrogenase family.

Its subcellular location is the mitochondrion matrix. The catalysed reaction is L-glutamate 5-semialdehyde + NAD(+) + H2O = L-glutamate + NADH + 2 H(+). It participates in amino-acid degradation; L-proline degradation into L-glutamate; L-glutamate from L-proline: step 2/2. Functionally, irreversible conversion of delta-1-pyrroline-5-carboxylate (P5C), derived either from proline or ornithine, to glutamate. This is a necessary step in the pathway interconnecting the urea and tricarboxylic acid cycles. In Dictyostelium discoideum (Social amoeba), this protein is Delta-1-pyrroline-5-carboxylate dehydrogenase, mitochondrial.